The sequence spans 206 residues: LexA repressor (206 aa).

Residues 28–48 constitute a DNA-binding region (H-T-H motif); that stretch reads RAEIATRLGFKSANAAEEHLK. Residues Ser123 and Lys160 each act as for autocatalytic cleavage activity in the active site.

This sequence belongs to the peptidase S24 family. As to quaternary structure, homodimer.

The enzyme catalyses Hydrolysis of Ala-|-Gly bond in repressor LexA.. In terms of biological role, represses a number of genes involved in the response to DNA damage (SOS response), including recA and lexA. In the presence of single-stranded DNA, RecA interacts with LexA causing an autocatalytic cleavage which disrupts the DNA-binding part of LexA, leading to derepression of the SOS regulon and eventually DNA repair. This is LexA repressor from Shewanella putrefaciens (strain CN-32 / ATCC BAA-453).